Reading from the N-terminus, the 63-residue chain is Large ribosomal subunit protein uL29 (63 aa).

Belongs to the universal ribosomal protein uL29 family.

The polypeptide is Large ribosomal subunit protein uL29 (Idiomarina loihiensis (strain ATCC BAA-735 / DSM 15497 / L2-TR)).